The following is a 1476-amino-acid chain: Cystic fibrosis transmembrane conductance regulator (1476 aa).

At 1 to 77 (MQKSPLEKAS…QLIHALRRCF (77 aa)) the chain is on the cytoplasmic side. The helical transmembrane segment at 78-98 (VWRFVFYGVLLYLGEVTKAVQ) threads the bilayer. Residues 81-365 (FVFYGVLLYL…TAVQIWYDSL (285 aa)) enclose the ABC transmembrane type-1 1 domain. The Extracellular segment spans residues 99-122 (PVLLGRIIASYDPDNTEERSIAIY). The helical transmembrane segment at 123–146 (LGIGLCLLFIVRTLLLHPAIFGLH) threads the bilayer. Residues 147–195 (HIGMQMRIAMFSLIYKKTLKLSSRVLDKISIGQLISLLSNNLNKFDEGL) are Cytoplasmic-facing. Residues 196 to 216 (ALAHFIWIAPLQVVLLMGLLW) form a helical membrane-spanning segment. Over 217–222 (DLLQFS) the chain is Extracellular. The helical transmembrane segment at 223-243 (AFCGLGLLIVLVIFQAILGKM) threads the bilayer. Over 244–298 (MVKYRDKRAAKINERLVITSEVIDNIYSVKAYCWESAMEKIIESLREEELKMTRR) the chain is Cytoplasmic. A helical membrane pass occupies residues 299–319 (SAYMRFFTSSAFFFSGFFVVF). Over 320–339 (LSVLPYTVINGIVLRKIFTT) the chain is Extracellular. The helical transmembrane segment at 340–358 (ISFCIVLRMSVTRQFPTAV) threads the bilayer. Over 359–853 (QIWYDSLGMI…YLRYFTLHRG (495 aa)) the chain is Cytoplasmic. ATP is bound by residues tryptophan 401, 458–465 (GSTGAGKT), and glutamine 493. In terms of domain architecture, ABC transporter 1 spans 412 to 646 (VQLNNDDRKT…RPDFSSKLMG (235 aa)). Cysteine 524 carries the S-palmitoyl cysteine lipid modification. A phosphoserine mark is found at serine 549 and serine 660. The tract at residues 654–826 (TEERRSSILT…EEINEEDLKE (173 aa)) is disordered R region. Serine 670 is subject to Phosphoserine; by PKA. 3 positions are modified to phosphoserine: serine 684, serine 698, and serine 710. The residue at position 715 (threonine 715) is a Phosphothreonine. Serine 732, serine 763, serine 785, serine 790, and serine 808 each carry phosphoserine. Residues 854 to 874 (LFAVLIWCVLVFLVEVAASLF) form a helical membrane-spanning segment. Positions 854–1153 (LFAVLIWCVL…SSIDTDSLMR (300 aa)) constitute an ABC transmembrane type-1 2 domain. Residues 875–913 (VLWLLKNNPVNGGNNGTKIANTSYVVVITSSSFYYIFYI) lie on the Extracellular side of the membrane. Residues asparagine 889 and asparagine 895 are each glycosylated (N-linked (GlcNAc...) asparagine). The discontinuously helical transmembrane segment at 914-934 (YVGVADTLLALSLFRGLPLVH) threads the bilayer. The Cytoplasmic portion of the chain corresponds to 935 to 985 (TLITASKILHRKMLHSILHAPMSTFNKLKAGGILNRFSKDIAILDDFLPLT). A helical membrane pass occupies residues 986–1006 (IFDFIQLLFIVVGAIIVVSAL). At 1007–1008 (QP) the chain is on the extracellular side. The helical transmembrane segment at 1009-1029 (YIFLATVPGLAVFILLRAYFL) threads the bilayer. At 1030-1090 (HTSQQLKQLE…TANWFMYLAT (61 aa)) the chain is on the cytoplasmic side. The chain crosses the membrane as a helical span at residues 1091–1111 (LRWFQMRIDMIFVLFFIVVTF). Topologically, residues 1112-1125 (ISILTTGEGEGTTG) are extracellular. Residues 1126-1146 (IILTLAMNIMSTLQWAVNSSI) form a helical membrane-spanning segment. The Cytoplasmic portion of the chain corresponds to 1147–1476 (DTDSLMRSVS…TEEEVQETRL (330 aa)). One can recognise an ABC transporter 2 domain in the interval 1208-1439 (VKDLTVKYVD…KSVFQRALSS (232 aa)). ATP is bound by residues tyrosine 1215 and 1240–1247 (GRTGSGKS). An interaction with GORASP2 region spans residues 1382-1476 (RVLRQAFAGC…TEEEVQETRL (95 aa)). A lipid anchor (S-palmitoyl cysteine) is attached at cysteine 1391. A phosphoserine mark is found at serine 1440 and serine 1452. A compositionally biased stretch (basic residues) spans 1445–1456 (LFHGRHSSKQKP). Residues 1445 to 1476 (LFHGRHSSKQKPRTQITAVKEETEEEVQETRL) form a disordered region. Residues 1466-1476 (ETEEEVQETRL) are compositionally biased toward acidic residues. The short motif at 1474-1476 (TRL) is the PDZ-binding element.

This sequence belongs to the ABC transporter superfamily. ABCC family. CFTR transporter (TC 3.A.1.202) subfamily. As to quaternary structure, monomer; does not require oligomerization for channel activity. May form oligomers in the membrane. Interacts with SLC4A7 through NHERF1. Interacts with SHANK2. Interacts with NHERF1 and MYO6. Interacts (via C-terminus) with GOPC (via PDZ domain); this promotes CFTR internalization and thereby decreases channel activity. Interacts with SLC4A7 through NHERF1. Found in a complex with MYO5B and RAB11A. Interacts with ANO1. Interacts with SLC26A8. Interacts with AHCYL1; the interaction increases CFTR activity. Interacts with CSE1L. The core-glycosylated form interacts with GORASP2 (via PDZ GRASP-type 1 domain) in respone to ER stress. Interacts with MARCHF2; the interaction leads to CFTR ubiqtuitination and degradation. Interacts with ADGRG2. Post-translationally, N-glycosylated. Phosphorylated; cAMP treatment promotes phosphorylation and activates the channel. Dephosphorylation decreases the ATPase activity (in vitro). Phosphorylation at PKA sites activates the channel. Phosphorylation at PKC sites enhances the response to phosphorylation by PKA. Phosphorylated by AMPK; this inhibits channel activity. In terms of processing, ubiquitinated, leading to its degradation in the lysosome. Deubiquitination by USP10 in early endosomes enhances its endocytic recycling to the cell membrane. Ubiquitinated by RNF185 during ER stress. Ubiquitinated by MARCHF2. In terms of tissue distribution, detected in epithelial cells in nasopharynx, submandibular gland, pancreas and ileum (at protein level). Expressed in the epididymis. In the caput section of the epididymis, expressed uniformly on both the luminal and basolateral sides of the ducts and on sperm in the caput lumen (at protein level). In the cauda, detected along the luminal border but not continuously and is also expressed on the basolateral surface. Within the caudal lumen, detected on sperm.

It is found in the apical cell membrane. Its subcellular location is the early endosome membrane. The protein localises to the cell membrane. It localises to the recycling endosome membrane. The protein resides in the endoplasmic reticulum membrane. It is found in the nucleus. The enzyme catalyses ATP + H2O + closed Cl(-) channel = ADP + phosphate + open Cl(-) channel.. It carries out the reaction chloride(in) = chloride(out). It catalyses the reaction hydrogencarbonate(in) = hydrogencarbonate(out). The catalysed reaction is ATP + H2O = ADP + phosphate + H(+). Functionally, epithelial ion channel that plays an important role in the regulation of epithelial ion and water transport and fluid homeostasis. Mediates the transport of chloride ions across the cell membrane. Possesses an intrinsic ATPase activity and utilizes ATP to gate its channel; the passive flow of anions through the channel is gated by cycles of ATP binding and hydrolysis by the ATP-binding domains. The ion channel is also permeable to HCO(3)(-); selectivity depends on the extracellular chloride concentration. Exerts its function also by modulating the activity of other ion channels and transporters. Contributes to the regulation of the pH and the ion content of the epithelial fluid layer. Modulates the activity of the epithelial sodium channel (ENaC) complex, in part by regulating the cell surface expression of the ENaC complex. May regulate bicarbonate secretion and salvage in epithelial cells by regulating the transporter SLC4A7. Can inhibit the chloride channel activity of ANO1. Plays a role in the chloride and bicarbonate homeostasis during sperm epididymal maturation and capacitation. This Rattus norvegicus (Rat) protein is Cystic fibrosis transmembrane conductance regulator.